Reading from the N-terminus, the 347-residue chain is MKPPILIIIMATIMTGTMIVMLSSHWLLIWIGFEMNMLAIIPILMKKYNPRAMEASTKYFLTQATASMLLMMGVTINLLYSGQWVISKISNPIASIMMTTALTMKLGLSPFHFWVPEVTQGITLMSGMILLTWQKIAPMSILYQISPSINTNLLMLMALTSVLVGGWGGLNQTQLRKIMAYSSIAHMGWMAAIITYNPTMMVLNLTLYILMTLSTFMLFMLNSSTTTLSLSHMWNKFPLITSMILILMLSLGGLPPLSGFIPKWMIIQELTKNNMIIIPTLMAITALLNLYFYLRLTYSTALTMFPSTNNMKMKWQFEYTKKATLLPPLIITSTMLLPLTPMLSVLD.

10 helical membrane passes run 3-23 (PPIL…VMLS), 25-45 (HWLL…PILM), 66-86 (ASML…QWVI), 111-131 (FHFW…MILL), 149-169 (INTN…GWGG), 178-198 (IMAY…TYNP), 201-221 (MVLN…LFML), 237-257 (FPLI…LPPL), 274-294 (NMII…YFYL), and 325-345 (LLPP…MLSV).

The protein belongs to the complex I subunit 2 family. Core subunit of respiratory chain NADH dehydrogenase (Complex I) which is composed of 45 different subunits. Interacts with TMEM242.

It is found in the mitochondrion inner membrane. The catalysed reaction is a ubiquinone + NADH + 5 H(+)(in) = a ubiquinol + NAD(+) + 4 H(+)(out). Its function is as follows. Core subunit of the mitochondrial membrane respiratory chain NADH dehydrogenase (Complex I) which catalyzes electron transfer from NADH through the respiratory chain, using ubiquinone as an electron acceptor. Essential for the catalytic activity and assembly of complex I. This chain is NADH-ubiquinone oxidoreductase chain 2, found in Canis lupus familiaris (Dog).